The sequence spans 163 residues: Allophycocyanin alpha-B chain (163 aa).

N71 carries the N4-methylasparagine modification. Position 81 (C81) interacts with (2R,3E)-phycocyanobilin.

This sequence belongs to the phycobiliprotein family. Contains one covalently linked bilin chromophore.

The protein localises to the plastid. The protein resides in the chloroplast thylakoid membrane. In terms of biological role, allophycocyanin is a photosynthetic bile pigment-protein complex with maximum absorption at approximately 650 nanometers. This chain is Allophycocyanin alpha-B chain (apcD), found in Cyanidium caldarium (Red alga).